The chain runs to 2542 residues: Talin-2 (2542 aa).

The region spanning 88–406 (RPQKIRMLDG…GYIDIILKKK (319 aa)) is the FERM domain. The tract at residues 312–406 (GVSFFLVKEK…GYIDIILKKK (95 aa)) is interaction with PIP5K1C. A phosphoserine mark is found at serine 428, serine 449, serine 623, and serine 1023. Tyrosine 1665 carries the phosphotyrosine modification. Phosphothreonine is present on threonine 1843. The 240-residue stretch at 2294 to 2533 (TEWVDPEDPT…QIRQQQYKFL (240 aa)) folds into the I/LWEQ domain.

Interacts directly with PIP5K1C.

The protein localises to the cytoplasm. The protein resides in the cell junction. It is found in the focal adhesion. Its subcellular location is the synapse. It localises to the cell membrane. The protein localises to the cytoskeleton. Its function is as follows. As a major component of focal adhesion plaques that links integrin to the actin cytoskeleton, may play an important role in cell adhesion. Recruits PIP5K1C to focal adhesion plaques and strongly activates its kinase activity. This Homo sapiens (Human) protein is Talin-2 (TLN2).